The following is a 421-amino-acid chain: Gamma-glutamyl phosphate reductase (421 aa).

It belongs to the gamma-glutamyl phosphate reductase family.

It is found in the cytoplasm. It carries out the reaction L-glutamate 5-semialdehyde + phosphate + NADP(+) = L-glutamyl 5-phosphate + NADPH + H(+). The protein operates within amino-acid biosynthesis; L-proline biosynthesis; L-glutamate 5-semialdehyde from L-glutamate: step 2/2. In terms of biological role, catalyzes the NADPH-dependent reduction of L-glutamate 5-phosphate into L-glutamate 5-semialdehyde and phosphate. The product spontaneously undergoes cyclization to form 1-pyrroline-5-carboxylate. The protein is Gamma-glutamyl phosphate reductase of Bordetella petrii (strain ATCC BAA-461 / DSM 12804 / CCUG 43448).